The primary structure comprises 672 residues: DNA ligase (672 aa).

Residues aspartate 37–aspartate 41, serine 86–leucine 87, and glutamate 115 each bind NAD(+). Lysine 117 acts as the N6-AMP-lysine intermediate in catalysis. NAD(+) is bound by residues arginine 138, glutamate 172, lysine 288, and lysine 312. Zn(2+) contacts are provided by cysteine 406, cysteine 409, cysteine 424, and cysteine 429. In terms of domain architecture, BRCT spans aspartate 590–valine 672.

It belongs to the NAD-dependent DNA ligase family. LigA subfamily. Mg(2+) serves as cofactor. Mn(2+) is required as a cofactor.

It catalyses the reaction NAD(+) + (deoxyribonucleotide)n-3'-hydroxyl + 5'-phospho-(deoxyribonucleotide)m = (deoxyribonucleotide)n+m + AMP + beta-nicotinamide D-nucleotide.. DNA ligase that catalyzes the formation of phosphodiester linkages between 5'-phosphoryl and 3'-hydroxyl groups in double-stranded DNA using NAD as a coenzyme and as the energy source for the reaction. It is essential for DNA replication and repair of damaged DNA. The polypeptide is DNA ligase (Anoxybacillus flavithermus (strain DSM 21510 / WK1)).